Reading from the N-terminus, the 307-residue chain is Predicted GPI-anchored protein 44 (307 aa).

An N-terminal signal peptide occupies residues 1-22; sequence MLSTNNLLILLIFSFLITNVKS. Asparagine 146 and asparagine 217 each carry an N-linked (GlcNAc...) asparagine glycan. The interval 232–261 is disordered; sequence TPQPLLETPSQESSAPNIDSTTPTTIDNTV. The span at 239 to 254 shows a compositional bias: polar residues; it reads TPSQESSAPNIDSTTP. Residue glycine 286 is the site of GPI-anchor amidated glycine attachment. Residues 287–307 constitute a propeptide, removed in mature form; that stretch reads GAMGYPSISVALGLVFIAYLV.

The protein resides in the cell membrane. This is Predicted GPI-anchored protein 44 (PGA44) from Candida albicans (strain SC5314 / ATCC MYA-2876) (Yeast).